Reading from the N-terminus, the 134-residue chain is Small ribosomal subunit protein bS16 (134 aa).

The disordered stretch occupies residues 79–134; sequence AGIAKRPSRNNPTKGEPGKKAQERLALAKQAEEEAAAKAAEAAAAAAAPAEEAASE. A compositionally biased stretch (low complexity) spans 115-134; sequence AKAAEAAAAAAAPAEEAASE.

The protein belongs to the bacterial ribosomal protein bS16 family.

The sequence is that of Small ribosomal subunit protein bS16 from Brucella canis (strain ATCC 23365 / NCTC 10854 / RM-666).